Here is a 376-residue protein sequence, read N- to C-terminus: Cysteine proteinase 2 (376 aa).

An N-terminal signal peptide occupies residues 1-18 (MRLLVFLILLIFVNFSFA). Residues 19 to 122 (NVRPNGRRFS…EVLNVEDLQT (104 aa)) constitute a propeptide, activation peptide. 3 cysteine pairs are disulfide-bonded: cysteine 144/cysteine 187, cysteine 178/cysteine 221, and cysteine 279/cysteine 365. The active site involves cysteine 147. Catalysis depends on residues histidine 286 and asparagine 343.

It belongs to the peptidase C1 family.

Its subcellular location is the lysosome. In terms of biological role, cysteine proteinases 1 and 2 are believed to participate in the breakdown of protein during differentiation of Dictyostelium as a response to starvation. This is Cysteine proteinase 2 (cprB) from Dictyostelium discoideum (Social amoeba).